A 677-amino-acid chain; its full sequence is MADTCFRLHTEFEPTGDQPEAIGQIVANLGQGVRDQVLLGVTGSGKTFTVANVIAACNRPALILAPNKTLAAQLYNEFRALFPDNAVEYFVSYYDYYQPEAYVPASDTYIEKDSSINDNIDKLRHAATHALLTRRDVVIVASVSCIYGLGSPEYYARLVIPVECGQRFSMDALMTRLVEVQYQRNDFDFHRGTFRVRGDVLEVIPAYHHERALRIEFFGDDIDAISEIDPLTGEVLGSVGKTVIYPASHYVSDRDNLVRAMSDIRDELGERLREYQSANRLVEAQRLEQRTMLDLEMMEELGYCNGIENYSRHLDGRAAGQPPSCLLDYFPDDFLLFVDESHITVPQVGAMYKGDRSRKSTLVDFGFRLPSALDNRPLEFAEFLTRINQTVYVSATPGKWELDRSQGVIAEQIIRPTGLVDPVVEVRPTRGQVDDLLAECRARAARDERVLITTLTKRMAEDLTEHLGNMGLSVRYLHSDIDTMERMAIIQALRRGECDVLVGINLLREGLDIPEVSLVSILDADKEGFLRSTGSLIQTFGRAARNAAGRVILYADTVTASMRAAMDETARRRERQQAWNEANGIEPRTIRKSLDTPFDAIYSAASEGGKGRGRGRGRQAAPAVENVAEYGTSPEDMAKHIQKLEREMREAAKELEFERAATLRDRIRLLRERLIEA.

The region spanning 27–192 is the Helicase ATP-binding domain; sequence ANLGQGVRDQ…QRNDFDFHRG (166 aa). 40-47 lines the ATP pocket; the sequence is GVTGSGKT. The Beta-hairpin signature appears at 93–116; it reads YYDYYQPEAYVPASDTYIEKDSSI. The 163-residue stretch at 432–594 folds into the Helicase C-terminal domain; that stretch reads QVDDLLAECR…IEPRTIRKSL (163 aa). Residues 638-673 enclose the UVR domain; sequence AKHIQKLEREMREAAKELEFERAATLRDRIRLLRER.

Belongs to the UvrB family. In terms of assembly, forms a heterotetramer with UvrA during the search for lesions. Interacts with UvrC in an incision complex.

The protein localises to the cytoplasm. The UvrABC repair system catalyzes the recognition and processing of DNA lesions. A damage recognition complex composed of 2 UvrA and 2 UvrB subunits scans DNA for abnormalities. Upon binding of the UvrA(2)B(2) complex to a putative damaged site, the DNA wraps around one UvrB monomer. DNA wrap is dependent on ATP binding by UvrB and probably causes local melting of the DNA helix, facilitating insertion of UvrB beta-hairpin between the DNA strands. Then UvrB probes one DNA strand for the presence of a lesion. If a lesion is found the UvrA subunits dissociate and the UvrB-DNA preincision complex is formed. This complex is subsequently bound by UvrC and the second UvrB is released. If no lesion is found, the DNA wraps around the other UvrB subunit that will check the other stand for damage. The sequence is that of UvrABC system protein B from Nitratidesulfovibrio vulgaris (strain DP4) (Desulfovibrio vulgaris).